The primary structure comprises 326 residues: DNA-directed RNA polymerase subunit alpha (326 aa).

The alpha N-terminal domain (alpha-NTD) stretch occupies residues 1-230; the sequence is MLKIEKQAKA…LHLDPFLEIG (230 aa). An alpha C-terminal domain (alpha-CTD) region spans residues 249 to 326; sequence DIQVIDDKSH…YDLEKNGSPE (78 aa).

It belongs to the RNA polymerase alpha chain family. Homodimer. The RNAP catalytic core consists of 2 alpha, 1 beta, 1 beta' and 1 omega subunit. When a sigma factor is associated with the core the holoenzyme is formed, which can initiate transcription.

The catalysed reaction is RNA(n) + a ribonucleoside 5'-triphosphate = RNA(n+1) + diphosphate. DNA-dependent RNA polymerase catalyzes the transcription of DNA into RNA using the four ribonucleoside triphosphates as substrates. This is DNA-directed RNA polymerase subunit alpha from Fusobacterium nucleatum subsp. nucleatum (strain ATCC 25586 / DSM 15643 / BCRC 10681 / CIP 101130 / JCM 8532 / KCTC 2640 / LMG 13131 / VPI 4355).